The following is a 629-amino-acid chain: MAYHNPFIVNGKIRFPENTNLVRHVEKWARVRGDKLAYRFLDFSTERDGVERDILWSEFSARNRAVGARLQQVTQPGDRIAILCPQNLDYLISFFGALYSGRIAVPLFDPAEPGHVGRLHAVLDDCTPSTILTTTDSAEGVRKFIRSRSAKERPRVIAVDAVPTEVASTWQQPEANELTTAYLQYTSGSTRVPSGVQITHLNLPTNVLQVLNALEGQEGDRGVSWLPFFHDMGLITVLLASVLGHSFTFMTPAAFVRRPGRWIRELARKPGETGGTFSAAPNFAFEHAAMRGVPRDDEPPLDLSNVKGILNGSEPVSPASMRKFFKAFEPYGLRETAVKPSYGLAEATLFVSTTPMDEVPTVIHVDRDELNKQRFVEVAADAPNAVAQVSAGKVGVDEWAVIVDTETASELPDGQIGEIWLHGNNLGIGYWGKEEESAQTFRNILKSRVPESHAEGAPDDGLWVRTGDYGTYFKGHLYIAGRIKDLVIIDGRNHYPQDLEYTAQESTKALRVGYVAAFSVPANQLPQKVFDDPHAGLSFDPEDTSEQLVIVGERAAGTHKLEYQPIADDIRAAIAVGHGVTVRDVLLVSAGTIPRTSSGKIGRRACRTAYIDGSLRSGVSSPTVFATGS.

ATP-binding positions include 186–191, serine 341, alanine 345, aspartate 468, and arginine 482; that span reads TSGSTR.

The protein belongs to the ATP-dependent AMP-binding enzyme family. Monomer.

The enzyme catalyses a long-chain fatty acid + holo-[ACP] + ATP = a long-chain fatty acyl-[ACP] + AMP + diphosphate. The catalysed reaction is dodecanoate + ATP + H(+) = dodecanoyl-AMP + diphosphate. It catalyses the reaction tetradecanoate + ATP + H(+) = tetradecanoyl-AMP + diphosphate. Its pathway is lipid metabolism; mycolic acid biosynthesis. Its activity is regulated as follows. The acyl-AMP ligase activity is inhibited by the alkylphosphate esters of AMP, adenosine 50-dodecylphosphate (AMPC12) and eicosyl-AMP (AMPC20). Its function is as follows. Involved in the biosynthesis of mycolic acids. Catalyzes the activation of long-chain fatty acids as acyl-adenylates (acyl-AMP), which are then transferred to the phosphopantetheine arm of the polyketide synthase Pks13 for further chain extension. Can use dodecanoate (C12) and tetradecanoate (C14). This Mycobacterium marinum (strain ATCC BAA-535 / M) protein is Long-chain-fatty-acid--AMP ligase FadD32 (fadD32).